The chain runs to 264 residues: MVESKLTIADRSFASRLIMGTGGASNLAVLQEALVASGTELTTVAIRRVDAEGGTGLLDLLNRLGITPLPNTAGCRSAAEAVLTAQLAREALATNWVKLEVIADERTLLPDAIELVRAAEQLVDDGFVVLPYTNDDPVLARRLEDTGCAAVMPLGSPIGTGLGITNPHNIEMIVASAGVPVVLDAGIGTASDAALAMELGCDAVLLATAVTRAADPAAMAAAMSAAVTAGYLARRAGRIPKRFWAQASSPTLVTTQSPGAESGN.

The active-site Schiff-base intermediate with DXP is Lys98. Residues Gly159, Ala185–Gly186, and Ala207–Thr208 contribute to the 1-deoxy-D-xylulose 5-phosphate site.

This sequence belongs to the ThiG family. In terms of assembly, homotetramer. Forms heterodimers with either ThiH or ThiS.

It localises to the cytoplasm. The enzyme catalyses [ThiS sulfur-carrier protein]-C-terminal-Gly-aminoethanethioate + 2-iminoacetate + 1-deoxy-D-xylulose 5-phosphate = [ThiS sulfur-carrier protein]-C-terminal Gly-Gly + 2-[(2R,5Z)-2-carboxy-4-methylthiazol-5(2H)-ylidene]ethyl phosphate + 2 H2O + H(+). Its pathway is cofactor biosynthesis; thiamine diphosphate biosynthesis. Functionally, catalyzes the rearrangement of 1-deoxy-D-xylulose 5-phosphate (DXP) to produce the thiazole phosphate moiety of thiamine. Sulfur is provided by the thiocarboxylate moiety of the carrier protein ThiS. In vitro, sulfur can be provided by H(2)S. This Mycobacterium marinum (strain ATCC BAA-535 / M) protein is Thiazole synthase.